Here is a 300-residue protein sequence, read N- to C-terminus: Ribonuclease HIII (300 aa).

The RNase H type-2 domain occupies 86-300 (RPRLGVDESG…FNEICDSASA (215 aa)). The a divalent metal cation site is built by Asp92, Glu93, and Asp196.

Belongs to the RNase HII family. RnhC subfamily. The cofactor is Mn(2+). Mg(2+) is required as a cofactor.

Its subcellular location is the cytoplasm. The catalysed reaction is Endonucleolytic cleavage to 5'-phosphomonoester.. Its function is as follows. Endonuclease that specifically degrades the RNA of RNA-DNA hybrids. The polypeptide is Ribonuclease HIII (Chlamydia felis (strain Fe/C-56) (Chlamydophila felis)).